Reading from the N-terminus, the 152-residue chain is Probable ribose-5-phosphate isomerase B (152 aa).

10–11 serves as a coordination point for D-ribulose 5-phosphate; sequence DH. C69 serves as the catalytic Proton acceptor. 70 to 74 is a binding site for D-ribulose 5-phosphate; sequence GTGVG. H102 acts as the Proton donor in catalysis. Positions 103, 113, 136, and 140 each coordinate D-ribulose 5-phosphate.

Belongs to the LacAB/RpiB family. Homodimer.

The enzyme catalyses aldehydo-D-ribose 5-phosphate = D-ribulose 5-phosphate. Its pathway is carbohydrate degradation; pentose phosphate pathway; D-ribose 5-phosphate from D-ribulose 5-phosphate (non-oxidative stage): step 1/1. In terms of biological role, catalyzes the interconversion of ribulose-5-P and ribose-5-P. This Mycoplasma genitalium (strain ATCC 33530 / DSM 19775 / NCTC 10195 / G37) (Mycoplasmoides genitalium) protein is Probable ribose-5-phosphate isomerase B.